Consider the following 586-residue polypeptide: Assimilatory ferredoxin-dependent nitrite reductase (586 aa).

Residues Cys411, Cys417, Cys455, and Cys459 each coordinate [4Fe-4S] cluster. Cys459 provides a ligand contact to siroheme. Residues 566-586 are disordered; sequence SWYPFADEDEPPKTEQPMTSD.

The protein belongs to the nitrite and sulfite reductase 4Fe-4S domain family. Monomer. Siroheme serves as cofactor. The cofactor is [4Fe-4S] cluster.

It carries out the reaction 6 oxidized [2Fe-2S]-[ferredoxin] + NH4(+) + 2 H2O = nitrite + 6 reduced [2Fe-2S]-[ferredoxin] + 8 H(+). The protein operates within nitrogen metabolism; nitrate reduction (assimilation). Its activity is regulated as follows. Inhibited by cyanide and azide. Catalyzes the reduction of nitrite to ammonium in the nitrate assimilation pathway, using ferredoxin as the electron donor. Can use reduced methyl viologen but neither NADPH nor NADH as electron donors. In Haloferax mediterranei (strain ATCC 33500 / DSM 1411 / JCM 8866 / NBRC 14739 / NCIMB 2177 / R-4) (Halobacterium mediterranei), this protein is Assimilatory ferredoxin-dependent nitrite reductase.